The following is a 791-amino-acid chain: Organellar oligopeptidase A, chloroplastic/mitochondrial (791 aa).

Residues 1-82 constitute a chloroplast and mitochondrion transit peptide; sequence MLMATPTSRA…SSPPSMSSAA (82 aa). 2 coiled-coil regions span residues 118 to 138 and 239 to 259; these read RPGI…LEKS and DDEK…LSHK. Residue histidine 571 coordinates Zn(2+). Glutamate 572 is a catalytic residue. 2 residues coordinate Zn(2+): histidine 575 and glutamate 601. 703-709 serves as a coordination point for substrate; sequence HIFAGGY.

The protein belongs to the peptidase M3 family. Requires Zn(2+) as cofactor.

It localises to the mitochondrion matrix. It is found in the plastid. Its subcellular location is the chloroplast stroma. It catalyses the reaction Hydrolysis of oligopeptides, with broad specificity. Gly or Ala commonly occur as P1 or P1' residues, but more distant residues are also important, as is shown by the fact that Z-Gly-Pro-Gly-|-Gly-Pro-Ala is cleaved, but not Z-(Gly)(5).. Inhibited by salicylic acid. Oligopeptidase degrading short peptides from 8 to 23 amino acid residues. Plays a role in the degradation of transit peptides and of peptides derived from other proteolytic events. Does not exhibit a strict cleavage pattern. Binds salicylic acid. The protein is Organellar oligopeptidase A, chloroplastic/mitochondrial of Arabidopsis thaliana (Mouse-ear cress).